We begin with the raw amino-acid sequence, 157 residues long: Crossover junction endodeoxyribonuclease RuvC (157 aa).

Residues aspartate 7, glutamate 67, and aspartate 139 contribute to the active site. 3 residues coordinate Mg(2+): aspartate 7, glutamate 67, and aspartate 139.

This sequence belongs to the RuvC family. Homodimer which binds Holliday junction (HJ) DNA. The HJ becomes 2-fold symmetrical on binding to RuvC with unstacked arms; it has a different conformation from HJ DNA in complex with RuvA. In the full resolvosome a probable DNA-RuvA(4)-RuvB(12)-RuvC(2) complex forms which resolves the HJ. Mg(2+) is required as a cofactor.

It is found in the cytoplasm. It carries out the reaction Endonucleolytic cleavage at a junction such as a reciprocal single-stranded crossover between two homologous DNA duplexes (Holliday junction).. Its function is as follows. The RuvA-RuvB-RuvC complex processes Holliday junction (HJ) DNA during genetic recombination and DNA repair. Endonuclease that resolves HJ intermediates. Cleaves cruciform DNA by making single-stranded nicks across the HJ at symmetrical positions within the homologous arms, yielding a 5'-phosphate and a 3'-hydroxyl group; requires a central core of homology in the junction. The consensus cleavage sequence is 5'-(A/T)TT(C/G)-3'. Cleavage occurs on the 3'-side of the TT dinucleotide at the point of strand exchange. HJ branch migration catalyzed by RuvA-RuvB allows RuvC to scan DNA until it finds its consensus sequence, where it cleaves and resolves the cruciform DNA. The chain is Crossover junction endodeoxyribonuclease RuvC from Prochlorococcus marinus subsp. pastoris (strain CCMP1986 / NIES-2087 / MED4).